The chain runs to 146 residues: Small ribosomal subunit protein uS5 (146 aa).

Positions 8–71 (FEESIVNIGR…DNAFKNLSKV (64 aa)) constitute an S5 DRBM domain.

Belongs to the universal ribosomal protein uS5 family. In terms of assembly, part of the 30S ribosomal subunit. Contacts proteins S4 and S8.

Its function is as follows. With S4 and S12 plays an important role in translational accuracy. In terms of biological role, located at the back of the 30S subunit body where it stabilizes the conformation of the head with respect to the body. The chain is Small ribosomal subunit protein uS5 from Sulfurimonas denitrificans (strain ATCC 33889 / DSM 1251) (Thiomicrospira denitrificans (strain ATCC 33889 / DSM 1251)).